The chain runs to 420 residues: L-rhamnose isomerase (420 aa).

Mn(2+) is bound by residues histidine 262, aspartate 294, and aspartate 296.

Belongs to the rhamnose isomerase family. In terms of assembly, homotetramer. It depends on Mn(2+) as a cofactor.

The protein localises to the cytoplasm. It carries out the reaction L-rhamnopyranose = L-rhamnulose. The protein operates within carbohydrate degradation; L-rhamnose degradation; glycerone phosphate from L-rhamnose: step 1/3. Catalyzes the interconversion of L-rhamnose and L-rhamnulose. The polypeptide is L-rhamnose isomerase (Pectobacterium carotovorum subsp. carotovorum (strain PC1)).